Consider the following 98-residue polypeptide: C-X-C motif chemokine 10 (98 aa).

The N-terminal stretch at 1–21 (MNPSAAVIFCLILLGLSGTQG) is a signal peptide. At R26 the chain carries Citrulline. 2 disulfide bridges follow: C30–C57 and C32–C74.

This sequence belongs to the intercrine alpha (chemokine CxC) family. Monomer, dimer, and tetramer. Interacts with CXCR3 (via N-terminus). As to expression, expressed in the spleen, thymus, lymph nodes and liver. Expressed in astrocytes, microglia, and neurons.

It localises to the secreted. Functionally, pro-inflammatory cytokine that is involved in a wide variety of processes such as chemotaxis, differentiation, and activation of peripheral immune cells, regulation of cell growth, apoptosis and modulation of angiostatic effects. Plays thereby an important role during viral infections by stimulating the activation and migration of immune cells to the infected sites. Mechanistically, binding of CXCL10 to the CXCR3 receptor activates G protein-mediated signaling and results in downstream activation of phospholipase C-dependent pathway, an increase in intracellular calcium production and actin reorganization. In turn, recruitment of activated Th1 lymphocytes occurs at sites of inflammation. Activation of the CXCL10/CXCR3 axis also plays an important role in neurons in response to brain injury for activating microglia, the resident macrophage population of the central nervous system, and directing them to the lesion site. This recruitment is an essential element for neuronal reorganization. The sequence is that of C-X-C motif chemokine 10 (Cxcl10) from Mus musculus (Mouse).